The chain runs to 619 residues: Grainyhead-like protein 2 homolog (619 aa).

Residues M1–D90 are transcription activation. Disordered stretches follow at residues H86–E108, N125–A147, and E423–S444. The span at E99 to E108 shows a compositional bias: polar residues. Positions A239–I477 constitute a Grh/CP2 DB domain.

This sequence belongs to the grh/CP2 family. Grainyhead subfamily.

The protein localises to the nucleus. It is found in the membrane. Its function is as follows. Transcription factor playing an important role in primary neurulation and in epithelial development. Binds directly to the consensus DNA sequence 5'-AACCGGTT-3' acting as an activator and repressor on distinct target genes. This is Grainyhead-like protein 2 homolog (grhl2) from Xenopus tropicalis (Western clawed frog).